Here is a 425-residue protein sequence, read N- to C-terminus: Serine--tRNA ligase (425 aa).

Position 228–230 (228–230) interacts with L-serine; sequence TAE. 259–261 provides a ligand contact to ATP; that stretch reads RSE. Position 282 (glutamate 282) interacts with L-serine. 346-349 is a binding site for ATP; that stretch reads EIAS. Residue serine 382 participates in L-serine binding.

Belongs to the class-II aminoacyl-tRNA synthetase family. Type-1 seryl-tRNA synthetase subfamily. As to quaternary structure, homodimer. The tRNA molecule binds across the dimer.

The protein resides in the cytoplasm. It catalyses the reaction tRNA(Ser) + L-serine + ATP = L-seryl-tRNA(Ser) + AMP + diphosphate + H(+). It carries out the reaction tRNA(Sec) + L-serine + ATP = L-seryl-tRNA(Sec) + AMP + diphosphate + H(+). It participates in aminoacyl-tRNA biosynthesis; selenocysteinyl-tRNA(Sec) biosynthesis; L-seryl-tRNA(Sec) from L-serine and tRNA(Sec): step 1/1. Functionally, catalyzes the attachment of serine to tRNA(Ser). Is also able to aminoacylate tRNA(Sec) with serine, to form the misacylated tRNA L-seryl-tRNA(Sec), which will be further converted into selenocysteinyl-tRNA(Sec). In Rickettsia akari (strain Hartford), this protein is Serine--tRNA ligase.